The chain runs to 388 residues: F-box/kelch-repeat protein At3g17530 (388 aa).

One can recognise an F-box domain in the interval 1–50 (MMISDLPHDLESEILSRVPAKSLAKWKTTCKRWYALFRDPSFVKKNFDKA). Kelch repeat units lie at residues 163–208 (CCYY…VSLK) and 336–383 (RIYI…AEEN).

The sequence is that of F-box/kelch-repeat protein At3g17530 from Arabidopsis thaliana (Mouse-ear cress).